The sequence spans 201 residues: Large ribosomal subunit protein uL4 (201 aa).

Positions 42–67 (GNSAQKTRSEVSGGGKKPWNQKGTGR) are disordered.

This sequence belongs to the universal ribosomal protein uL4 family. Part of the 50S ribosomal subunit.

Its function is as follows. One of the primary rRNA binding proteins, this protein initially binds near the 5'-end of the 23S rRNA. It is important during the early stages of 50S assembly. It makes multiple contacts with different domains of the 23S rRNA in the assembled 50S subunit and ribosome. In terms of biological role, forms part of the polypeptide exit tunnel. This Legionella pneumophila (strain Lens) protein is Large ribosomal subunit protein uL4.